A 356-amino-acid polypeptide reads, in one-letter code: Tricetin 3',4',5'-O-trimethyltransferase (356 aa).

123–129 (MNQDKVL) serves as a coordination point for substrate. The substrate binding stretch occupies residues 155 to 173 (AFEYHGTDPRFNRVFNEGM). Residues Gly201, Asp224, Asp244, Met245, and Lys258 each coordinate S-adenosyl-L-methionine. Residue His262 is the Proton acceptor of the active site.

It belongs to the class I-like SAM-binding methyltransferase superfamily. Cation-independent O-methyltransferase family. COMT subfamily. As to quaternary structure, homodimer. The monomer is fully active and dimerization is not required for sequential methylation. In terms of tissue distribution, expressed in roots, stems and leaves.

It catalyses the reaction tricetin + 3 S-adenosyl-L-methionine = 3',4',5'-O-trimethyltricetin + 3 S-adenosyl-L-homocysteine + 3 H(+). In terms of biological role, flavonoid B-ring-specific O-methyltransferase with a preference for flavones &gt; dihydroflavones &gt; flavonols that possess at least two B-ring hydroxyl groups. Active with tricetin, 5-hydroxyferulic acid, luteolin, quercitin, eriodictyol, quercetagetin, taxifolin, gossypetin and myricetin. No activity with naringenin, apigenin, kaempferol, 7,8-dihydroxy- or 5,7,8-trihydroxy flavones, chlorogenic acid, gallic acid or daphnetin. Catalyzes the sequential O-methylation of tricetin via 3'-O-methyltricetin, 3',5'-O-methyltricetin to 3',4',5'-O-trimethyltricetin. May also be involved in S lignin biosynthesis. The chain is Tricetin 3',4',5'-O-trimethyltransferase (OMT2) from Triticum aestivum (Wheat).